The sequence spans 232 residues: Lipoprotein-releasing system ATP-binding protein LolD (232 aa).

The ABC transporter domain occupies 11–232 (IEVTDLQRAF…LHDGRLIEEY (222 aa)). 47-54 (GPSGAGKS) is a binding site for ATP.

It belongs to the ABC transporter superfamily. Lipoprotein translocase (TC 3.A.1.125) family. As to quaternary structure, the complex is composed of two ATP-binding proteins (LolD) and two transmembrane proteins (LolC and LolE).

Its subcellular location is the cell inner membrane. Part of the ABC transporter complex LolCDE involved in the translocation of mature outer membrane-directed lipoproteins, from the inner membrane to the periplasmic chaperone, LolA. Responsible for the formation of the LolA-lipoprotein complex in an ATP-dependent manner. This chain is Lipoprotein-releasing system ATP-binding protein LolD, found in Zymomonas mobilis subsp. mobilis (strain ATCC 10988 / DSM 424 / LMG 404 / NCIMB 8938 / NRRL B-806 / ZM1).